We begin with the raw amino-acid sequence, 241 residues long: Ubiquinone biosynthesis O-methyltransferase (241 aa).

Residues arginine 42, glycine 62, aspartate 83, and methionine 127 each contribute to the S-adenosyl-L-methionine site.

The protein belongs to the methyltransferase superfamily. UbiG/COQ3 family.

It catalyses the reaction a 3-demethylubiquinol + S-adenosyl-L-methionine = a ubiquinol + S-adenosyl-L-homocysteine + H(+). The catalysed reaction is a 3-(all-trans-polyprenyl)benzene-1,2-diol + S-adenosyl-L-methionine = a 2-methoxy-6-(all-trans-polyprenyl)phenol + S-adenosyl-L-homocysteine + H(+). It participates in cofactor biosynthesis; ubiquinone biosynthesis. O-methyltransferase that catalyzes the 2 O-methylation steps in the ubiquinone biosynthetic pathway. In Pectobacterium atrosepticum (strain SCRI 1043 / ATCC BAA-672) (Erwinia carotovora subsp. atroseptica), this protein is Ubiquinone biosynthesis O-methyltransferase.